A 177-amino-acid polypeptide reads, in one-letter code: Adenine phosphoribosyltransferase (177 aa).

Belongs to the purine/pyrimidine phosphoribosyltransferase family. As to quaternary structure, homodimer.

Its subcellular location is the cytoplasm. The catalysed reaction is AMP + diphosphate = 5-phospho-alpha-D-ribose 1-diphosphate + adenine. The protein operates within purine metabolism; AMP biosynthesis via salvage pathway; AMP from adenine: step 1/1. Its function is as follows. Catalyzes a salvage reaction resulting in the formation of AMP, that is energically less costly than de novo synthesis. This chain is Adenine phosphoribosyltransferase, found in Chlorobium phaeobacteroides (strain BS1).